We begin with the raw amino-acid sequence, 293 residues long: 33 kDa chaperonin (293 aa).

Disulfide bonds link cysteine 238–cysteine 240 and cysteine 271–cysteine 274.

This sequence belongs to the HSP33 family. In terms of processing, under oxidizing conditions two disulfide bonds are formed involving the reactive cysteines. Under reducing conditions zinc is bound to the reactive cysteines and the protein is inactive.

The protein resides in the cytoplasm. Its function is as follows. Redox regulated molecular chaperone. Protects both thermally unfolding and oxidatively damaged proteins from irreversible aggregation. Plays an important role in the bacterial defense system toward oxidative stress. The sequence is that of 33 kDa chaperonin from Staphylococcus aureus (strain Mu3 / ATCC 700698).